Consider the following 389-residue polypeptide: Apoptosis inhibitor U19 (389 aa).

It belongs to the beta-herpesvirinae UL38 protein family. In terms of assembly, interacts with host MDM2; this interaction leads to the stabilization of host TP53.

The protein localises to the host cytoplasm. It is found in the host nucleus. In terms of biological role, plays a role in the inhibition of host apoptosis to facilitate efficient viral replication. Promotes stabilization and inactivation of host TP53 through interaction with host MDM2. This Human herpesvirus 6A (strain Uganda-1102) (HHV-6 variant A) protein is Apoptosis inhibitor U19 (U19).